The following is a 337-amino-acid chain: Mitochondrial glutathione transporter SLC25A40 (337 aa).

Solcar repeat units lie at residues 14-132 (VTPL…LSAF), 140-224 (NETR…LKRW), and 234-328 (PTFM…GKSF). Helical transmembrane passes span 20-40 (MIASCTGAVLTSLMVTPLDVV), 104-124 (LWSGLPPTLVMAIPATVIYFT), 146-166 (IVAGVVARFGAVTVISPLELI), 200-221 (WAPTILRDVPFSAMYWYNYENL), 240-260 (FTSGALSGSFAAVATLPFDVV), and 299-319 (GLFTGLIPRLVKIVPACAIMI).

It belongs to the mitochondrial carrier (TC 2.A.29) family.

The protein localises to the mitochondrion inner membrane. The enzyme catalyses glutathione(in) = glutathione(out). Its function is as follows. Probable mitochondrial transporter required for glutathione import into mitochondria. Glutathione, which plays key roles in oxidative metabolism, is produced exclusively in the cytosol and is imported in many organelles. Mitochondrial glutathione is required for the activity and stability of proteins containing iron-sulfur clusters, as well as erythropoiesis. The chain is Mitochondrial glutathione transporter SLC25A40 from Mus musculus (Mouse).